The following is a 304-amino-acid chain: Zinc carboxypeptidase (304 aa).

Residues Q1 to S294 enclose the Peptidase M14 domain. The Zn(2+) site is built by H58 and E61. C125 and C148 form a disulfide bridge. H184 is a binding site for Zn(2+). E259 (proton donor/acceptor) is an active-site residue.

Belongs to the peptidase M14 family. It depends on Zn(2+) as a cofactor. As to expression, gut specific.

It localises to the secreted. Involved in the digestion of the blood meal. The sequence is that of Zinc carboxypeptidase from Simulium vittatum (Striped black fly).